We begin with the raw amino-acid sequence, 461 residues long: D-arabinono-1,4-lactone oxidase (461 aa).

The region spanning 24-194 (FSAISLGLRC…VDITISVVPA (171 aa)) is the FAD-binding PCMH-type domain. His-61 is subject to Pros-8alpha-FAD histidine.

The protein belongs to the oxygen-dependent FAD-linked oxidoreductase family. The cofactor is FAD.

It localises to the mitochondrion membrane. The enzyme catalyses D-arabinono-1,4-lactone + O2 = dehydro-D-arabinono-1,4-lactone + H2O2 + H(+). The protein operates within cofactor biosynthesis; D-erythroascorbate biosynthesis; dehydro-D-arabinono-1,4-lactone from D-arabinose: step 2/2. This chain is D-arabinono-1,4-lactone oxidase (alo1), found in Schizosaccharomyces pombe (strain 972 / ATCC 24843) (Fission yeast).